Here is a 342-residue protein sequence, read N- to C-terminus: N-acetyl-gamma-glutamyl-phosphate reductase (342 aa).

The active site involves Cys-147.

It belongs to the NAGSA dehydrogenase family. Type 1 subfamily.

The protein resides in the cytoplasm. The enzyme catalyses N-acetyl-L-glutamate 5-semialdehyde + phosphate + NADP(+) = N-acetyl-L-glutamyl 5-phosphate + NADPH + H(+). The protein operates within amino-acid biosynthesis; L-arginine biosynthesis; N(2)-acetyl-L-ornithine from L-glutamate: step 3/4. In terms of biological role, catalyzes the NADPH-dependent reduction of N-acetyl-5-glutamyl phosphate to yield N-acetyl-L-glutamate 5-semialdehyde. This Campylobacter jejuni subsp. jejuni serotype O:6 (strain 81116 / NCTC 11828) protein is N-acetyl-gamma-glutamyl-phosphate reductase.